A 283-amino-acid polypeptide reads, in one-letter code: 2-hydroxy-6-oxononadienedioate/2-hydroxy-6-oxononatrienedioate hydrolase (283 aa).

The 235-residue stretch at 35–269 (VVVMFHGSGP…KCGHWAQWEH (235 aa)) folds into the AB hydrolase-1 domain. The active-site Proton acceptor is histidine 263.

Belongs to the AB hydrolase superfamily. MhpC family. Homodimer.

It carries out the reaction (2Z,4E)-2-hydroxy-6-oxonona-2,4-dienedioate + H2O = (2Z)-2-hydroxypenta-2,4-dienoate + succinate + H(+). The enzyme catalyses (2Z,4E,7E)-2-hydroxy-6-oxonona-2,4,7-trienedioate + H2O = (2Z)-2-hydroxypenta-2,4-dienoate + fumarate + H(+). Its pathway is aromatic compound metabolism; 3-phenylpropanoate degradation. Catalyzes the cleavage of the C5-C6 bond of 2-hydroxy-6-oxononadienedioate and 2-hydroxy-6-oxononatrienedioate, a dienol ring fission product of the bacterial meta-cleavage pathway for degradation of phenylpropionic acid. In Pseudomonas sp, this protein is 2-hydroxy-6-oxononadienedioate/2-hydroxy-6-oxononatrienedioate hydrolase.